We begin with the raw amino-acid sequence, 831 residues long: Probable glucan 1,3-beta-glucosidase D (831 aa).

Basic and acidic residues-rich tracts occupy residues 1–24, 44–56, 79–93, 102–115, 137–151, and 198–213; these read MPSH…YREV, RRDD…RSHE, RSHD…RSRA, SRRD…EYRR, RDGQ…DREA, and QRER…MESK. 2 disordered regions span residues 1–179 and 192–241; these read MPSH…SGSH and HYDE…GQSK. At 1–297 the chain is on the cytoplasmic side; the sequence is MPSHSRSRDR…AQPPFWKRKK (297 aa). The chain crosses the membrane as a helical; Signal-anchor for type II membrane protein span at residues 298 to 318; the sequence is WWIVIGVLVVVLAIVIPVAVV. Residues 319-831 lie on the Extracellular side of the membrane; it reads MSKKHGHDDD…PSFGDLPEYY (513 aa). 7 N-linked (GlcNAc...) asparagine glycosylation sites follow: Asn376, Asn381, Asn393, Asn410, Asn442, Asn546, and Asn558. The Proton donor role is filled by Glu597. N-linked (GlcNAc...) asparagine glycans are attached at residues Asn610, Asn636, Asn669, and Asn689. Catalysis depends on Glu702, which acts as the Nucleophile.

Belongs to the glycosyl hydrolase 5 (cellulase A) family.

The protein resides in the cell membrane. It carries out the reaction Successive hydrolysis of beta-D-glucose units from the non-reducing ends of (1-&gt;3)-beta-D-glucans, releasing alpha-glucose.. Its function is as follows. Glucosidase involved in the degradation of cellulosic biomass. Active on lichenan. This is Probable glucan 1,3-beta-glucosidase D (exgD) from Aspergillus oryzae (strain ATCC 42149 / RIB 40) (Yellow koji mold).